Consider the following 259-residue polypeptide: Hydroxyethylthiazole kinase 1 (259 aa).

Methionine 38 contributes to the substrate binding site. The ATP site is built by arginine 113 and serine 158. Glycine 185 is a substrate binding site.

Belongs to the Thz kinase family. Mg(2+) serves as cofactor.

The catalysed reaction is 5-(2-hydroxyethyl)-4-methylthiazole + ATP = 4-methyl-5-(2-phosphooxyethyl)-thiazole + ADP + H(+). The protein operates within cofactor biosynthesis; thiamine diphosphate biosynthesis; 4-methyl-5-(2-phosphoethyl)-thiazole from 5-(2-hydroxyethyl)-4-methylthiazole: step 1/1. Functionally, catalyzes the phosphorylation of the hydroxyl group of 4-methyl-5-beta-hydroxyethylthiazole (THZ). The polypeptide is Hydroxyethylthiazole kinase 1 (Leuconostoc mesenteroides subsp. mesenteroides (strain ATCC 8293 / DSM 20343 / BCRC 11652 / CCM 1803 / JCM 6124 / NCDO 523 / NBRC 100496 / NCIMB 8023 / NCTC 12954 / NRRL B-1118 / 37Y)).